We begin with the raw amino-acid sequence, 177 residues long: Large ribosomal subunit protein uL6 (177 aa).

The protein belongs to the universal ribosomal protein uL6 family. Part of the 50S ribosomal subunit.

In terms of biological role, this protein binds to the 23S rRNA, and is important in its secondary structure. It is located near the subunit interface in the base of the L7/L12 stalk, and near the tRNA binding site of the peptidyltransferase center. The polypeptide is Large ribosomal subunit protein uL6 (Brucella canis (strain ATCC 23365 / NCTC 10854 / RM-666)).